The primary structure comprises 334 residues: Ornithine carbamoyltransferase (334 aa).

Carbamoyl phosphate is bound by residues 56 to 59, Gln83, Arg107, and 134 to 137; these read STRT and HPTQ. Residues Asn168, Asp232, and 236-237 each bind L-ornithine; that span reads SM. Carbamoyl phosphate is bound by residues 274-275 and Arg320; that span reads CL.

Belongs to the aspartate/ornithine carbamoyltransferase superfamily. OTCase family.

The protein localises to the cytoplasm. It catalyses the reaction carbamoyl phosphate + L-ornithine = L-citrulline + phosphate + H(+). Its pathway is amino-acid biosynthesis; L-arginine biosynthesis; L-arginine from L-ornithine and carbamoyl phosphate: step 1/3. Functionally, reversibly catalyzes the transfer of the carbamoyl group from carbamoyl phosphate (CP) to the N(epsilon) atom of ornithine (ORN) to produce L-citrulline. This Shigella dysenteriae serotype 1 (strain Sd197) protein is Ornithine carbamoyltransferase.